The primary structure comprises 643 residues: Cell pattern formation-associated protein asm-1 (643 aa).

Positions 1-37 are disordered; it reads MNPNTPADVYYGQMSQGSSMPVTTVPSHSHYASQQPP. Positions 13 to 33 are enriched in polar residues; sequence QMSQGSSMPVTTVPSHSHYAS. An HTH APSES-type domain is found at 116–222; the sequence is RVTATLWEDE…HNIGALLYHP (107 aa). The H-T-H motif DNA-binding region spans 150–171; it reads GTKLLNVAGMTRGRRDGILKSE. The interval 229–627 is disordered; the sequence is SQVMAAAEQR…GSLPSPTYTA (399 aa). Polar residues predominate over residues 306-335; that stretch reads DGYQWSQQSMSGTQGNSSLSLDTSLGSNAR. Residues 336–349 show a composition bias toward low complexity; that stretch reads SMPSTPATTPPGST. A compositionally biased stretch (polar residues) spans 350-367; that stretch reads IQSMQNYPPVSQSYESSR. Over residues 368 to 391 the composition is skewed to low complexity; it reads QMYQGQSAQQAQYQSQQHYSSQPQ. 3 stretches are compositionally biased toward polar residues: residues 471–481, 529–551, and 563–577; these read GSYNYNTQAVN, QPSSSLYNVMSNERTGSNGTQGN, and SLPNGYSAQPSVMNG. Residues 583–612 are nuclear localization domain; it reads KRGRDDDDDGGRPTTSAPNLGPGMDMKRRK.

It belongs to the EFG1/PHD1/stuA family.

The protein resides in the nucleus. Transcription factor that regulates asexual reproduction. Binds the StuA-response elements (StRE) with the consensus sequence 5'-(A/T)CGCG(T/A)N(A/C)-3' at the promoters of target genes. Required for rapid conidial germination, normal vegetative morphology, and protoperithecium formation. The protein is Cell pattern formation-associated protein asm-1 of Neurospora crassa (strain ATCC 24698 / 74-OR23-1A / CBS 708.71 / DSM 1257 / FGSC 987).